A 247-amino-acid polypeptide reads, in one-letter code: Protein SODIUM POTASSIUM ROOT DEFECTIVE 3 (247 aa).

A disordered region spans residues 130–166; that stretch reads GSTGQDTVATEESEASAPKRGSSGPVEEKKKSSGSGS. Residues 167–235 enclose the HMA domain; it reads DQVVVLRVSL…KVKNAQFWTP (69 aa). Cys180 and Cys183 together coordinate a metal cation.

It is found in the cytoplasm. Its function is as follows. Heavy metal-associated protein involved in salt tolerance. This Arabidopsis thaliana (Mouse-ear cress) protein is Protein SODIUM POTASSIUM ROOT DEFECTIVE 3.